The sequence spans 177 residues: Adenylyl-sulfate kinase (177 aa).

12-19 provides a ligand contact to ATP; the sequence is GLSGAGKT. The active-site Phosphoserine intermediate is S86.

The protein belongs to the APS kinase family.

It carries out the reaction adenosine 5'-phosphosulfate + ATP = 3'-phosphoadenylyl sulfate + ADP + H(+). The protein operates within sulfur metabolism; hydrogen sulfide biosynthesis; sulfite from sulfate: step 2/3. Functionally, catalyzes the synthesis of activated sulfate. This chain is Adenylyl-sulfate kinase, found in Picosynechococcus sp. (strain ATCC 27264 / PCC 7002 / PR-6) (Agmenellum quadruplicatum).